The primary structure comprises 38 residues: MKVQASVKPRCEYCRVIKRKGVLRVICSRQPKHKQRQG.

Belongs to the bacterial ribosomal protein bL36 family.

This is Large ribosomal subunit protein bL36 from Roseiflexus castenholzii (strain DSM 13941 / HLO8).